Here is a 141-residue protein sequence, read N- to C-terminus: Small ribosomal subunit protein uS12 (141 aa).

Residue D89 is modified to 3-methylthioaspartic acid. The disordered stretch occupies residues 104–141 (ASGAVGPSNTNKLNRNVSRSKYGVKRPKAGAKPASKAK). A compositionally biased stretch (polar residues) spans 110–122 (PSNTNKLNRNVSR). Residues 125 to 141 (YGVKRPKAGAKPASKAK) show a composition bias toward basic residues.

Belongs to the universal ribosomal protein uS12 family. In terms of assembly, part of the 30S ribosomal subunit. Contacts proteins S8 and S17. May interact with IF1 in the 30S initiation complex.

In terms of biological role, with S4 and S5 plays an important role in translational accuracy. Its function is as follows. Interacts with and stabilizes bases of the 16S rRNA that are involved in tRNA selection in the A site and with the mRNA backbone. Located at the interface of the 30S and 50S subunits, it traverses the body of the 30S subunit contacting proteins on the other side and probably holding the rRNA structure together. The combined cluster of proteins S8, S12 and S17 appears to hold together the shoulder and platform of the 30S subunit. This is Small ribosomal subunit protein uS12 from Methylacidiphilum infernorum (isolate V4) (Methylokorus infernorum (strain V4)).